Here is a 235-residue protein sequence, read N- to C-terminus: High affinity immunoglobulin epsilon receptor subunit beta (235 aa).

The segment at 1 to 23 is disordered; the sequence is MDTENRSRADLALPNPQESSSAP. Over 1–51 the chain is Cytoplasmic; the sequence is MDTENRSRADLALPNPQESSSAPDIELLEASPAKAAPPKQTWRTFLKKELE. The chain crosses the membrane as a helical span at residues 52-71; it reads FLGATQILVGLICLCFGTIV. Residues 72-89 lie on the Extracellular side of the membrane; it reads CSVLYVSDFDEEVLLLYK. A helical membrane pass occupies residues 90–109; that stretch reads LGYPFWGAVLFVLSGFLSII. Residues 110-122 are Cytoplasmic-facing; sequence SERKNTLYLVRGS. Residues 123–142 traverse the membrane as a helical segment; the sequence is LGANIVSSIAAGTGIAMLIL. Topologically, residues 143–171 are extracellular; the sequence is NLTNNFAYMNNCKNVTEDDGCFVASFTTE. Residues 172 to 191 traverse the membrane as a helical segment; it reads LVLMMLFLTILAFCSAVLFT. Topologically, residues 192–235 are cytoplasmic; the sequence is IYRIGQELESKKVPDDRLYEELNVYSPIYSELEDKGETSSPVDS. A phosphotyrosine mark is found at Y210 and Y216. Residue S217 is modified to Phosphoserine. Y220 is subject to Phosphotyrosine.

This sequence belongs to the MS4A family. In terms of assembly, tetramer of an alpha chain, a beta chain, and two disulfide linked gamma chains. Binds LILRB1. Interacts with FGR. Interacts with FGR and FES/FPS. Interacts with LYN. Post-translationally, phosphorylated on tyrosine residues by LYN.

Its subcellular location is the membrane. Its function is as follows. High affinity receptor that binds to the Fc region of immunoglobulins epsilon. Aggregation of FCER1 by multivalent antigens is required for the full mast cell response, including the release of preformed mediators (such as histamine) by degranulation and de novo production of lipid mediators and cytokines. Also mediates the secretion of important lymphokines. Binding of allergen to receptor-bound IgE leads to cell activation and the release of mediators responsible for the manifestations of allergy. This chain is High affinity immunoglobulin epsilon receptor subunit beta (Ms4a2), found in Mus musculus (Mouse).